A 430-amino-acid polypeptide reads, in one-letter code: Adenylosuccinate synthetase (430 aa).

Residues G12–K18 and G40–T42 each bind GTP. The Proton acceptor role is filled by D13. Mg(2+) contacts are provided by D13 and G40. IMP-binding positions include D13–K16, N38–H41, T128, R142, Q223, T238, and R302. Catalysis depends on H41, which acts as the Proton donor. T298–R304 contributes to the substrate binding site. GTP-binding positions include R304, S330 to D332, and S412 to G414.

It belongs to the adenylosuccinate synthetase family. In terms of assembly, homodimer. Mg(2+) is required as a cofactor.

Its subcellular location is the cytoplasm. The catalysed reaction is IMP + L-aspartate + GTP = N(6)-(1,2-dicarboxyethyl)-AMP + GDP + phosphate + 2 H(+). The protein operates within purine metabolism; AMP biosynthesis via de novo pathway; AMP from IMP: step 1/2. Its function is as follows. Plays an important role in the de novo pathway of purine nucleotide biosynthesis. Catalyzes the first committed step in the biosynthesis of AMP from IMP. The protein is Adenylosuccinate synthetase of Streptococcus gordonii (strain Challis / ATCC 35105 / BCRC 15272 / CH1 / DL1 / V288).